Consider the following 77-residue polypeptide: UPF0291 protein BLi02035/BL02933 (77 aa).

The disordered stretch occupies residues 57 to 77 (PEGNDVTPEKLKQEKRNRRLH).

This sequence belongs to the UPF0291 family.

The protein resides in the cytoplasm. This chain is UPF0291 protein BLi02035/BL02933, found in Bacillus licheniformis (strain ATCC 14580 / DSM 13 / JCM 2505 / CCUG 7422 / NBRC 12200 / NCIMB 9375 / NCTC 10341 / NRRL NRS-1264 / Gibson 46).